Here is a 185-residue protein sequence, read N- to C-terminus: Ribosome-recycling factor (185 aa).

Belongs to the RRF family.

It is found in the cytoplasm. In terms of biological role, responsible for the release of ribosomes from messenger RNA at the termination of protein biosynthesis. May increase the efficiency of translation by recycling ribosomes from one round of translation to another. This chain is Ribosome-recycling factor, found in Saccharopolyspora erythraea (strain ATCC 11635 / DSM 40517 / JCM 4748 / NBRC 13426 / NCIMB 8594 / NRRL 2338).